The primary structure comprises 75 residues: Putative membrane protein insertion efficiency factor (75 aa).

The protein belongs to the UPF0161 family.

The protein localises to the cell membrane. In terms of biological role, could be involved in insertion of integral membrane proteins into the membrane. This Bacillus subtilis (strain 168) protein is Putative membrane protein insertion efficiency factor (ytjA).